Here is a 1967-residue protein sequence, read N- to C-terminus: RQC trigger complex helicase SLH1 (1967 aa).

One can recognise a Helicase ATP-binding 1 domain in the interval Pro297–Met485. Ala310–Thr317 provides a ligand contact to ATP. The short motif at Asp427–His430 is the DEVH box element. Positions Asn516 to Gly735 constitute a Helicase C-terminal 1 domain. Residues Ala795 to Phe1100 enclose the SEC63 1 domain. The region spanning Tyr1149–Tyr1324 is the Helicase ATP-binding 2 domain. Ser1162–Thr1169 provides a ligand contact to ATP. A DEAH box motif is present at residues Asp1266–His1269. A Helicase C-terminal 2 domain is found at Met1355–Leu1550. The region spanning Ala1626–Trp1776 is the SEC63 2 domain.

This sequence belongs to the helicase family. SKI2 subfamily. In terms of assembly, component of the RQT (ribosome quality control trigger) complex, composed of SLH1, CUE3, and RQT4. Interacts with CUE3. Interacts with RQT4. Interacts with HEL2. Associates with translating ribosomes.

The protein resides in the cytoplasm. It is found in the cytosol. It carries out the reaction ATP + H2O = ADP + phosphate + H(+). Functionally, involved in activation of the ribosome quality control (RQC) pathway, a pathway that degrades nascent peptide chains during problematic translation. Drives the splitting of stalled ribosomes that are polyubiquitinated in a HEL2-dependent manner, as part of the ribosome quality control trigger (RQT) complex. Also represses the translation of non-poly(A) mRNAs together with SKI2. May block translation by inhibiting translation initiation factor 5B (FUN12) action on mRNAs lacking a 3' poly(A) structure. Involved in antiviral defense, preventing L-A dsRNA virus propagation by specifically blocking translation of viral mRNAs. This chain is RQC trigger complex helicase SLH1, found in Saccharomyces cerevisiae (strain ATCC 204508 / S288c) (Baker's yeast).